Here is a 730-residue protein sequence, read N- to C-terminus: Diacylglycerol kinase alpha (730 aa).

EF-hand domains lie at 111 to 146 and 156 to 191; these read RPED…MMRV and ELRP…TVPL. Positions 124, 126, 128, 135, 169, 171, 173, 175, and 180 each coordinate Ca(2+). 2 Phorbol-ester/DAG-type zinc fingers span residues 206 to 254 and 270 to 320; these read NHIW…AQPC and SHLW…GPEC. The DAGKc domain maps to 368 to 501; the sequence is SNTHPLLVFI…LDRWFLEVIP (134 aa). Lysine 479 bears the N6-acetyllysine mark.

This sequence belongs to the eukaryotic diacylglycerol kinase family. As to quaternary structure, monomer.

It localises to the cytoplasm. The protein resides in the cytosol. It carries out the reaction a 1,2-diacyl-sn-glycerol + ATP = a 1,2-diacyl-sn-glycero-3-phosphate + ADP + H(+). The catalysed reaction is a 1-O-alkyl-sn-glycerol + ATP = a 1-O-alkyl-sn-glycero-3-phosphate + ADP + H(+). The enzyme catalyses 1-O-alkyl-2-acyl-sn-glycerol + ATP = 1-O-alkyl-2-acyl-sn-glycero-3-phosphate + ADP + H(+). It catalyses the reaction 1,2-dihexadecanoyl-sn-glycerol + ATP = 1,2-dihexadecanoyl-sn-glycero-3-phosphate + ADP + H(+). It carries out the reaction 1-hexadecanoyl-2-(9Z-octadecenoyl)-sn-glycerol + ATP = 1-hexadecanoyl-2-(9Z-octadecenoyl)-sn-glycero-3-phosphate + ADP + H(+). The catalysed reaction is 2-(9Z-octadecenoyl)-glycerol + ATP = 2-(9Z-octadecenoyl)-sn-glycero-3-phosphate + ADP + H(+). The enzyme catalyses 1,2-di-(9Z-octadecenoyl)-sn-glycerol + ATP = 1,2-di-(9Z-octadecenoyl)-sn-glycero-3-phosphate + ADP + H(+). It catalyses the reaction 1-octadecanoyl-2-(5Z,8Z,11Z,14Z-eicosatetraenoyl)-sn-glycerol + ATP = 1-octadecanoyl-2-(5Z,8Z,11Z,14Z-eicosatetraenoyl)-sn-glycero-3-phosphate + ADP + H(+). It carries out the reaction 1,2-didecanoyl-sn-glycerol + ATP = 1,2-didecanoyl-sn-glycero-3-phosphate + ADP + H(+). The catalysed reaction is 1-O-hexadecyl-2-acetyl-sn-glycerol + ATP = 1-O-hexadecyl-2-acetyl-sn-glycero-3-phosphate + ADP + H(+). The enzyme catalyses 1-O-hexadecyl-2-(5Z,8Z,11Z,14Z-eicosatetraenoyl)-sn-glycerol + ATP = 1-O-hexadecyl-2-(5Z,8Z,11Z,14Z-eicosatetraenoyl)-sn-glycero-3-phosphate + ADP + H(+). It catalyses the reaction 1-O-hexadecyl-2-(9Z-octadecenoyl)-sn-glycerol + ATP = 1-O-hexadecyl-2-(9Z-octadecenoyl)-sn-glycero-3-phosphate + ADP + H(+). It carries out the reaction 1-O-hexadecyl-sn-glycerol + ATP = 1-O-hexadecyl-sn-glycero-3-phosphate + ADP + H(+). Its pathway is lipid metabolism; glycerolipid metabolism. With respect to regulation, stimulated by calcium and phosphatidylserine. Diacylglycerol kinase that converts diacylglycerol/DAG into phosphatidic acid/phosphatidate/PA and regulates the respective levels of these two bioactive lipids. Thereby, acts as a central switch between the signaling pathways activated by these second messengers with different cellular targets and opposite effects in numerous biological processes. Also plays an important role in the biosynthesis of complex lipids. Can also phosphorylate 1-alkyl-2-acylglycerol in vitro as efficiently as diacylglycerol provided it contains an arachidonoyl group. Also involved in the production of alkyl-lysophosphatidic acid, another bioactive lipid, through the phosphorylation of 1-alkyl-2-acetyl glycerol. The protein is Diacylglycerol kinase alpha (Dgka) of Mus musculus (Mouse).